The sequence spans 404 residues: GID complex subunit 9 (404 aa).

A LisH domain is found at 116–148 (SRVRLNRLVADYMMANGYHGAAALLCKDSQLEN). Residues 154–211 (IYKRYQLIHDSILQQELKEVLSWCSEHRAILKKNNSTLELEVRLQRFIELIKSKKLCQ) enclose the CTLH domain. The RING-Gid-type zinc-finger motif lies at 317-389 (CPVCTPCLND…REGFLRDPYS (73 aa)).

This sequence belongs to the FYV10 family. Identified in the GID/CTLH complex. In the absence of stress, the complex exists as an inactive anticipatory complex (GID(Ant)), composed of Gid1, the E3 ubiquitin-ligase Gid2, Gid5, Gid8, and the RING-like subunit Gid9, awaiting a substrate receptor to form the active E3 ligase complex. When cells are shifted to glucose-containing medium, the substrate receptor Gid4 is induced and becomes part of the complex, named GID(SR4). Additionally, Gid7 transforms the GID(SR4) E3 ligase core into a higher-order supramolecular assembly (Chelator-GID(SR4)). Under osmotic or heat stress, the substrate receptor Gid10 is induced and becomes part of the complex, named GID(SR10).

It is found in the cytoplasm. It localises to the nucleus. It carries out the reaction S-ubiquitinyl-[E2 ubiquitin-conjugating enzyme]-L-cysteine + [acceptor protein]-L-lysine = [E2 ubiquitin-conjugating enzyme]-L-cysteine + N(6)-ubiquitinyl-[acceptor protein]-L-lysine.. It functions in the pathway protein modification; protein ubiquitination. Component of the GID E3 ligase complex recruiting N termini and catalyzing ubiquitination of proteins targeted for degradation. GID E3 is regulated through assembly with interchangeable N-degron-binding substrate receptors induced by distinct environmental perturbations. Required for the adaptation to the presence of glucose in the growth medium; mediates in association with the substrate receptor VID24/GID4 the degradation of enzymes involved in gluconeogenesis when cells are shifted to glucose-containing medium. The protein is GID complex subunit 9 (gid9) of Schizosaccharomyces pombe (strain 972 / ATCC 24843) (Fission yeast).